We begin with the raw amino-acid sequence, 362 residues long: Mortality factor 4-like protein 1 (362 aa).

The region spanning 12-51 (QEGERVLCFHGPLLYEAKCVKVAIKDKQVKYFIHYSGWNK) is the Tudor-knot domain. An interaction with KAT8 region spans residues 26 to 62 (YEAKCVKVAIKDKQVKYFIHYSGWNKKSAVRPRRSEK). The segment at 113 to 182 (RELQKANQEQ…RKKRARVDPT (70 aa)) is disordered. The tract at residues 133–266 (PGKKTSGLQQ…VAGIKEYFNV (134 aa)) is sufficient for interaction with SIN3A. The short motif at 135 to 146 (KKTSGLQQKNVE) is the Nuclear localization signal element. Position 143 is an N6-acetyllysine (Lys143). Residues 164–230 (STSETPQPPR…FYLPAKKNVD (67 aa)) form an interaction with RB1-1 region. The interval 188 to 342 (TFMNRVEVKV…FLKYLAKNSA (155 aa)) is sufficient for interaction with PHF12. Residues 191-362 (NRVEVKVKIP…APPEYHRKAV (172 aa)) form the MRG domain. The segment at 323–344 (LALLLNYLHDFLKYLAKNSATL) is interaction with RB1-2.

Component of the NuA4 histone acetyltransferase complex which contains the catalytic subunit KAT5/TIP60 and the subunits EP400, TRRAP/PAF400, BRD8/SMAP, EPC1, DMAP1/DNMAP1, RUVBL1/TIP49, RUVBL2, ING3, actin, ACTL6A/BAF53A, MORF4L1/MRG15, MORF4L2/MRGX, MRGBP, YEATS4/GAS41, VPS72/YL1 and MEAF6. The NuA4 complex interacts with MYC and the adenovirus E1A protein. MORF4L1 may also participate in the formation of NuA4 related complexes which lack the KAT5/TIP60 catalytic subunit, but which include the SWI/SNF related protein SRCAP. Component of the mSin3A histone deacetylase complex, which includes SIN3A, HDAC2, ARID4B, MORF4L1, RBBP4/RbAp48, and RBBP7/RbAp46. May also interact with PHF12 and one or more as yet undefined members of the TLE (transducin-like enhancer of split) family of transcriptional repressors. Component of the SIN3B complex, which includes SIN3B, HDAC2 or HDAC1, PHF12 and MORF4L1. Interacts with RB1 and KAT8. Interacts with the N-terminus of MRFAP1. Found in a complex composed of MORF4L1, MRFAP1 and RB1. Interacts with the entire BRCA complex, which contains BRCA1, PALB2, BRCA2 and RAD51. Interacts with PALB2. Forms a complex with MSL1 and NUPR1.

Its subcellular location is the nucleus. Component of the NuA4 histone acetyltransferase (HAT) complex which is involved in transcriptional activation of select genes principally by acetylation of nucleosomal histones H4 and H2A. This modification may both alter nucleosome - DNA interactions and promote interaction of the modified histones with other proteins which positively regulate transcription. This complex may be required for the activation of transcriptional programs associated with oncogene and proto-oncogene mediated growth induction, tumor suppressor mediated growth arrest and replicative senescence, apoptosis, and DNA repair. The NuA4 complex ATPase and helicase activities seem to be, at least in part, contributed by the association of RUVBL1 and RUVBL2 with EP400. NuA4 may also play a direct role in DNA repair when directly recruited to sites of DNA damage. As part of the SIN3B complex represses transcription and counteracts the histone acetyltransferase activity of EP300 through the recognition H3K27ac marks by PHF12 and the activity of the histone deacetylase HDAC2. SIN3B complex is recruited downstream of the constitutively active genes transcriptional start sites through interaction with histones and mitigates histone acetylation and RNA polymerase II progression within transcribed regions contributing to the regulation of transcription. Required for homologous recombination repair (HRR) and resistance to mitomycin C (MMC). Involved in the localization of PALB2, BRCA2 and RAD51, but not BRCA1, to DNA-damage foci. In Mus musculus (Mouse), this protein is Mortality factor 4-like protein 1 (Morf4l1).